A 498-amino-acid chain; its full sequence is 3-octaprenyl-4-hydroxybenzoate carboxy-lyase (498 aa).

Asn-175 contacts Mn(2+). Prenylated FMN contacts are provided by residues 178-180, 192-194, and 197-198; these read IYR, RWL, and RG. Glu-241 contributes to the Mn(2+) binding site. Asp-290 serves as the catalytic Proton donor.

This sequence belongs to the UbiD family. As to quaternary structure, homohexamer. It depends on prenylated FMN as a cofactor. Mn(2+) is required as a cofactor.

It localises to the cell membrane. It catalyses the reaction a 4-hydroxy-3-(all-trans-polyprenyl)benzoate + H(+) = a 2-(all-trans-polyprenyl)phenol + CO2. It participates in cofactor biosynthesis; ubiquinone biosynthesis. Functionally, catalyzes the decarboxylation of 3-octaprenyl-4-hydroxy benzoate to 2-octaprenylphenol, an intermediate step in ubiquinone biosynthesis. This Yersinia pestis bv. Antiqua (strain Antiqua) protein is 3-octaprenyl-4-hydroxybenzoate carboxy-lyase.